A 100-amino-acid chain; its full sequence is MRGAAPTVADLNLELNDLVLPANLLSEEVLQSSDDEYEITEEESVVPFRIDTCCYRCEVAVRITLYAAELGLRTLEQLLVEGKLTFCCTACARSLNRNGR.

The interval 1 to 42 is E7 terminal domain; the sequence is MRGAAPTVADLNLELNDLVLPANLLSEEVLQSSDDEYEITEE. A zinc finger lies at 54–91; it reads CYRCEVAVRITLYAAELGLRTLEQLLVEGKLTFCCTAC. A Nuclear export signal motif is present at residues 72–80; that stretch reads LRTLEQLLV.

This sequence belongs to the papillomaviridae E7 protein family. Homodimer. Homooligomer. Interacts with host RB1; this interaction induces dissociation of RB1-E2F1 complex thereby disrupting RB1 activity. Interacts with host EP300; this interaction represses EP300 transcriptional activity. Interacts with protein E2; this interaction inhibits E7 oncogenic activity. Interacts with host TMEM173/STING; this interaction impairs the ability of TMEM173/STING to sense cytosolic DNA and promote the production of type I interferon (IFN-alpha and IFN-beta). In terms of processing, highly phosphorylated.

Its subcellular location is the host cytoplasm. It is found in the host nucleus. In terms of biological role, plays a role in viral genome replication by driving entry of quiescent cells into the cell cycle. Stimulation of progression from G1 to S phase allows the virus to efficiently use the cellular DNA replicating machinery to achieve viral genome replication. E7 protein has both transforming and trans-activating activities. Induces the disassembly of the E2F1 transcription factor from RB1, with subsequent transcriptional activation of E2F1-regulated S-phase genes. Interferes with host histone deacetylation mediated by HDAC1 and HDAC2, leading to transcription activation. Also plays a role in the inhibition of both antiviral and antiproliferative functions of host interferon alpha. Interaction with host TMEM173/STING impairs the ability of TMEM173/STING to sense cytosolic DNA and promote the production of type I interferon (IFN-alpha and IFN-beta). The protein is Protein E7 of Human papillomavirus 4.